A 176-amino-acid chain; its full sequence is Translation initiation factor IF-3 (176 aa).

It belongs to the IF-3 family. As to quaternary structure, monomer.

It is found in the cytoplasm. Its function is as follows. IF-3 binds to the 30S ribosomal subunit and shifts the equilibrium between 70S ribosomes and their 50S and 30S subunits in favor of the free subunits, thus enhancing the availability of 30S subunits on which protein synthesis initiation begins. This chain is Translation initiation factor IF-3, found in Streptococcus pyogenes serotype M4 (strain MGAS10750).